Reading from the N-terminus, the 327-residue chain is Poly(ribitol-phosphate) beta-N-acetylglucosaminyltransferase TarP (327 aa).

Residues Pro9, Asp41, Asn68, Arg76, and 92 to 94 (DSD) each bind UDP-N-acetyl-alpha-D-glucosamine. Mn(2+) is bound at residue Asp94. Asp181 (proton acceptor) is an active-site residue.

It belongs to the glycosyltransferase 2 family. In terms of assembly, homotrimer. Mn(2+) is required as a cofactor.

The catalysed reaction is 4-O-[(D-ribitylphospho)(n)-di{(2R)-glycerylphospho}]-N-acetyl-beta-D-mannosaminyl-(1-&gt;4)-N-acetyl-alpha-D-glucosaminyl di-trans,octa-cis-undecaprenyl diphosphate + n UDP-N-acetyl-alpha-D-glucosamine = 4-O-([3-N-acetyl-beta-D-glucosaminyl-1-D-ribitylphospho](n)-di{[2R]-1-glycerylphospho})-N-acetyl-beta-D-mannosaminyl-(1-&gt;4)-N-acetyl-alpha-D-glucosaminyl di-trans,octa-cis-undecaprenyl diphosphate + n UDP + n H(+). It participates in cell wall biogenesis; poly(ribitol phosphate) teichoic acid biosynthesis. Its function is as follows. Attaches beta-O-GlcNAc (beta-O-N-acetyl-D-glucosamine) residues to the C3 position of poly(RboP)-wall teichoic acids (WTAs). Attenuates immunogenicity of WTA and protects S.aureus against adaptative host defenses by allowing bacteria to evade recognition by preexisting anti-S.aureus antibodies. Also protects the cell from podophage infection. The chain is Poly(ribitol-phosphate) beta-N-acetylglucosaminyltransferase TarP from Staphylococcus aureus (strain N315).